Consider the following 181-residue polypeptide: UPF0302 protein lin2035 (181 aa).

It belongs to the UPF0302 family.

The polypeptide is UPF0302 protein lin2035 (Listeria innocua serovar 6a (strain ATCC BAA-680 / CLIP 11262)).